A 727-amino-acid chain; its full sequence is Glucans biosynthesis glucosyltransferase H (727 aa).

Residues 18–38 (SAMPNERPGAMEPQNLSKMPE) are disordered. The next 7 helical transmembrane spans lie at 58–78 (FLVVGGALLLSLFAIYEMGAV), 97–117 (VNFCWIALAFCSGIAGFLILL), 278–298 (LQQFAARIYGPVIGTGLGWWV), 408–428 (IMAYLSSPFWLMLILTGLMLA), 460–480 (LFYITMGVLFGPKIFGVLLLL), 496–516 (IFSVIFEVILSALIAPIMMFI), and 572–592 (LLAWMSPALIGLWIAVPISAW).

The protein belongs to the glycosyltransferase 2 family. OpgH subfamily.

Its subcellular location is the cell inner membrane. It functions in the pathway glycan metabolism; osmoregulated periplasmic glucan (OPG) biosynthesis. In terms of biological role, involved in the biosynthesis of osmoregulated periplasmic glucans (OPGs). This is Glucans biosynthesis glucosyltransferase H from Shewanella baltica (strain OS223).